We begin with the raw amino-acid sequence, 538 residues long: Translation initiation factor IF-3, chloroplastic (538 aa).

The transit peptide at 1 to 140 (MVRSSCLQCD…VTQRKEIAVF (140 aa)) directs the protein to the chloroplast. Residues 141–290 (SASGQAAEPE…EEVEEEQEVL (150 aa)) are head. 2 disordered regions span residues 146–165 (AAEP…PAAK) and 188–210 (RTDS…NWPS). The tract at residues 291–474 (SWADRRRALA…LILNLAPAGE (184 aa)) is IF-3 like. A disordered region spans residues 484 to 538 (AERDRKAAAEEEGEGDDLDFVDENEDEDVEGEGEEEEAEELEEETAEGTEVPTRS). The segment covering 493-530 (EEEGEGDDLDFVDENEDEDVEGEGEEEEAEELEEETAE) has biased composition (acidic residues).

Belongs to the IF-3 family. Monomer. In terms of processing, the N-terminus is blocked.

The protein localises to the plastid. The protein resides in the chloroplast. In terms of biological role, involved in chloroplast protein synthesis. It enhances the poly(A,U,G)-dependent binding of the initiator tRNA to chloroplast 30S subunits. The sequence is that of Translation initiation factor IF-3, chloroplastic from Euglena gracilis.